The primary structure comprises 320 residues: Small ribosomal subunit protein uS15m (320 aa).

Disordered regions lie at residues 37–60 (NISQ…AQQR) and 214–242 (QSLE…DTGS).

This sequence belongs to the universal ribosomal protein uS15 family. As to quaternary structure, component of the mitochondrial small ribosomal subunit (mt-SSU). Mature N.crassa 74S mitochondrial ribosomes consist of a small (37S) and a large (54S) subunit. The 37S small subunit contains a 16S ribosomal RNA (16S mt-rRNA) and 32 different proteins. The 54S large subunit contains a 23S rRNA (23S mt-rRNA) and 42 different proteins.

The protein resides in the mitochondrion. In terms of biological role, component of the mitochondrial ribosome (mitoribosome), a dedicated translation machinery responsible for the synthesis of mitochondrial genome-encoded proteins, including at least some of the essential transmembrane subunits of the mitochondrial respiratory chain. The mitoribosomes are attached to the mitochondrial inner membrane and translation products are cotranslationally integrated into the membrane. The polypeptide is Small ribosomal subunit protein uS15m (mrps28) (Neurospora crassa (strain ATCC 24698 / 74-OR23-1A / CBS 708.71 / DSM 1257 / FGSC 987)).